Consider the following 120-residue polypeptide: Putative membrane protein insertion efficiency factor (120 aa).

The interval 93 to 120 (GRSCQTDVDGANDDWNPASKRGERESFV) is disordered.

This sequence belongs to the UPF0161 family.

Its subcellular location is the cell membrane. Could be involved in insertion of integral membrane proteins into the membrane. The chain is Putative membrane protein insertion efficiency factor from Mycobacterium bovis (strain ATCC BAA-935 / AF2122/97).